We begin with the raw amino-acid sequence, 724 residues long: MAAEALAAEAVASRLARQEEDIRWLWAEVHRLRDEQLNAPDRCQAEGPCLTREVAQLRAENRELRHCLYRLRLCLAEELSHQARLESAARAEAGRAAAGAQPPPSQSLEEDVKKEIDPDNEVKNPPNFMKERLKFFEILKKDHQLLLAIYEKKGDSSNVITVRVADGRTVKGEAWKTTPYQVAAEISQELAETTVVAKVNGELWDLDRPLEGDATVELLTFEDEEARAVYWHSSAHVLGEALELHYGGLLCCSPPGDGSFHYDVYLEDRAVSSAELPVLESMCQAIIKEQQPFERLEVSTKVLLDLFKYNKFKCRILKEKVATPTTTVYRCGPLVELCKGPHVRHTGTIKVIKIFKNSLAYWADNPEMEMLQRVYGVSFPDEQRMAAWEELQEEARARDHRTIGKEQELFFFHDLSPGSCFFLPRGACIYNTLIDFIREQHHQRNFTEVLSPNMYSCKLWEASGHWQHYSENMFTFDIDKDTFALKPMNCPGHCLMFAHRPRSWREMPIRLADFGVLHRNEPSGALSGLTCVRRFQQDDAHIFCTVGQLEEEIKGCLQFLQSVYSTFGFSFQLNLSTRPENFLGKIELWDEAEKQLQNSLMEFGKPWKINPGEGAFYGPKIDLEIKDALGRYHQCATIQLDFQLPIRFNLTYVSKDGDDKKNPVIIHQAILGSVERMIAILSENYGGKWPFWLSPRQVMVIPVGPTCEKYALQWLEKRKRQIML.

Ala-2 is subject to N-acetylalanine. The stretch at 44–72 (QAEGPCLTREVAQLRAENRELRHCLYRLR) forms a coiled coil. The disordered stretch occupies residues 90-112 (RAEAGRAAAGAQPPPSQSLEEDV). Residues 155-220 (DSSNVITVRV…EGDATVELLT (66 aa)) enclose the TGS domain. Ser-451 is modified (phosphoserine).

Belongs to the class-II aminoacyl-tRNA synthetase family. In terms of assembly, may be a component of the multisynthetase complex (MSC), a large multi-subunit complex which contains at least eight different aminoacyl-tRNA synthetases plus three auxillary subunits AIMP1, AIMP2 and EEF1E1. Interacts with the MSC components EPRS1, AIMP1, AIMP2 and KARS1.

The protein localises to the cytoplasm. It is found in the nucleus. The enzyme catalyses tRNA(Thr) + L-threonine + ATP = L-threonyl-tRNA(Thr) + AMP + diphosphate + H(+). In terms of biological role, catalyzes the attachment of threonine to tRNA(Thr) in a two-step reaction: threonine is first activated by ATP to form Thr-AMP and then transferred to the acceptor end of tRNA(Thr). Also edits incorrectly charged tRNA(Thr) via its editing domain, at the post-transfer stage. The polypeptide is Threonine--tRNA ligase 2, cytoplasmic (TARS3) (Bos taurus (Bovine)).